We begin with the raw amino-acid sequence, 505 residues long: uncharacterized protein (505 aa).

Residues M1–A22 form the signal peptide. Residues N25 and N114 are each glycosylated (N-linked (GlcNAc...) asparagine). A run of 5 helical transmembrane segments spans residues L181–I201, I216–F236, F266–L286, I291–P311, and V318–V338. A glycan (N-linked (GlcNAc...) asparagine) is linked at N342. A run of 2 helical transmembrane segments spans residues I365–I385 and L400–I420. N-linked (GlcNAc...) asparagine glycosylation is present at N454.

This sequence belongs to the LU7TM family.

Its subcellular location is the membrane. This is an uncharacterized protein from Schizosaccharomyces pombe (strain 972 / ATCC 24843) (Fission yeast).